The following is a 427-amino-acid chain: UDP-N-acetylglucosamine 1-carboxyvinyltransferase 1 (427 aa).

23–24 (KN) contacts phosphoenolpyruvate. Arg96 is a UDP-N-acetyl-alpha-D-glucosamine binding site. Catalysis depends on Cys120, which acts as the Proton donor. A 2-(S-cysteinyl)pyruvic acid O-phosphothioketal modification is found at Cys120. UDP-N-acetyl-alpha-D-glucosamine-binding positions include 125 to 129 (RPIDL), Asp309, and Val331.

The protein belongs to the EPSP synthase family. MurA subfamily.

It is found in the cytoplasm. The enzyme catalyses phosphoenolpyruvate + UDP-N-acetyl-alpha-D-glucosamine = UDP-N-acetyl-3-O-(1-carboxyvinyl)-alpha-D-glucosamine + phosphate. Its pathway is cell wall biogenesis; peptidoglycan biosynthesis. Its function is as follows. Cell wall formation. Adds enolpyruvyl to UDP-N-acetylglucosamine. The chain is UDP-N-acetylglucosamine 1-carboxyvinyltransferase 1 from Streptococcus pneumoniae serotype 4 (strain ATCC BAA-334 / TIGR4).